The following is a 418-amino-acid chain: Creatine kinase U-type, mitochondrial (418 aa).

The N-terminal 39 residues, 1-39, are a transit peptide targeting the mitochondrion; the sequence is MAGPFSRLLSARPGLRLLALAGAGSLTAGILLRPESVGA. Residues 40–64 form a cardiolipin-binding region; the sequence is AAAERRRLYPPSAEYPDLRKHNNCM. One can recognise a Phosphagen kinase N-terminal domain in the interval 46-132; it reads RLYPPSAEYP…FDPVIQERHN (87 aa). S152 bears the Phosphoserine mark. The Phosphagen kinase C-terminal domain maps to 159 to 401; that stretch reads YVLSSRVRTG…NYLIDCERRL (243 aa). Residue 162–166 participates in ATP binding; that stretch reads SSRVR. At S197 the chain carries Phosphoserine. T214 bears the Phosphothreonine mark. H225 serves as a coordination point for ATP. Phosphoserine is present on S233. ATP is bound by residues R270, R326, and 354-359; that span reads RGTGGV. T356 carries the phosphothreonine modification. S366 carries the phosphoserine modification. Residue D369 coordinates ATP.

Belongs to the ATP:guanido phosphotransferase family. As to quaternary structure, exists as an octamer composed of four MTCK homodimers.

It is found in the mitochondrion inner membrane. It carries out the reaction creatine + ATP = N-phosphocreatine + ADP + H(+). Its function is as follows. Reversibly catalyzes the transfer of phosphate between ATP and various phosphogens (e.g. creatine phosphate). Creatine kinase isoenzymes play a central role in energy transduction in tissues with large, fluctuating energy demands, such as skeletal muscle, heart, brain and spermatozoa. The polypeptide is Creatine kinase U-type, mitochondrial (Ckmt1) (Mus musculus (Mouse)).